The following is a 1028-amino-acid chain: Formin-like protein 3 (1028 aa).

A lipid anchor (N-myristoyl glycine) is attached at glycine 2. The GBD/FH3 domain maps to 26-472 (MPMPEPCELE…EAFQRRCHLE (447 aa)). Threonine 95 is subject to Phosphothreonine. At serine 174 the chain carries Phosphoserine. The interval 493 to 541 (ELSEGMPPSDLDLLAPAPPPEEVLPLPPPPAPPLPPPPPPLPDKCPPAP) is disordered. The segment covering 508–541 (PAPPPEEVLPLPPPPAPPLPPPPPPLPDKCPPAP) has biased composition (pro residues). The 391-residue stretch at 561–951 (IKKPIKTKFR…MREKQLAQEA (391 aa)) folds into the FH2 domain. Positions 986 to 1018 (YEGKDGTIEDIITVLKSVPFTARTAKRGSRFFC) constitute a DAD domain. Position 1014 is a phosphoserine (serine 1014).

The protein belongs to the formin homology family. As to quaternary structure, interacts with SRGAP2 (via SH3 domain). In terms of tissue distribution, expressed in endothelial cells.

It localises to the cytoplasm. Its subcellular location is the cell membrane. In terms of biological role, plays a role in the regulation of cell morphology and cytoskeletal organization. Required in the control of cell shape and migration. Required for developmental angiogenesis. In this process, required for microtubule reorganization and for efficient endothelial cell elongation. In quiescent endothelial cells, triggers rearrangement of the actin cytoskeleton, but does not alter microtubule alignement. The chain is Formin-like protein 3 (FMNL3) from Homo sapiens (Human).